The sequence spans 81 residues: Acyl carrier protein (81 aa).

Residues 4–79 enclose the Carrier domain; that stretch reads QEIFEKVQTI…QAVDFISQKV (76 aa). Residue Ser39 is modified to O-(pantetheine 4'-phosphoryl)serine.

This sequence belongs to the acyl carrier protein (ACP) family. In terms of processing, 4'-phosphopantetheine is transferred from CoA to a specific serine of apo-ACP by AcpS. This modification is essential for activity because fatty acids are bound in thioester linkage to the sulfhydryl of the prosthetic group.

It is found in the plastid. It localises to the chloroplast. Its pathway is lipid metabolism; fatty acid biosynthesis. In terms of biological role, carrier of the growing fatty acid chain in fatty acid biosynthesis. In Guillardia theta (Cryptophyte), this protein is Acyl carrier protein.